A 590-amino-acid polypeptide reads, in one-letter code: Acetolactate synthase large subunit (590 aa).

Glu61 provides a ligand contact to thiamine diphosphate. FAD is bound by residues Arg163, 271–292 (HGTAYANFAVSECDLLIALGAR), and 314–333 (DIDPAEVGKNRIPQVAIVGD). A thiamine pyrophosphate binding region spans residues 405–484 (QHQMWSAQFL…IKIVIINNRW (80 aa)). Mg(2+) contacts are provided by Asp455 and Asn482.

The protein belongs to the TPP enzyme family. In terms of assembly, dimer of large and small chains. Requires Mg(2+) as cofactor. Thiamine diphosphate serves as cofactor.

The protein localises to the plastid. Its subcellular location is the chloroplast. It carries out the reaction 2 pyruvate + H(+) = (2S)-2-acetolactate + CO2. It functions in the pathway amino-acid biosynthesis; L-isoleucine biosynthesis; L-isoleucine from 2-oxobutanoate: step 1/4. Its pathway is amino-acid biosynthesis; L-valine biosynthesis; L-valine from pyruvate: step 1/4. The protein is Acetolactate synthase large subunit (ilvB) of Porphyra purpurea (Red seaweed).